The chain runs to 237 residues: Chloride intracellular channel protein 3 (237 aa).

A required for insertion into the membrane region spans residues 1 to 89 (MAETTKLQLF…EEFLEETLGP (89 aa)). The 79-residue stretch at 13–91 (ASEDGESVGH…FLEETLGPPD (79 aa)) folds into the GST N-terminal domain. The G-site signature appears at 23-26 (CPSC). A disulfide bridge connects residues Cys23 and Cys26. A helical transmembrane segment spans residues 25 to 45 (SCQRLFMVLLLKGVPFTLTTV). Residues 69 to 236 (DGDVKTDTLQ…LAAYQPAVHP (168 aa)) enclose the GST C-terminal domain. The residue at position 160 (Ser160) is a Phosphoserine.

The protein belongs to the chloride channel CLIC family. As to quaternary structure, associated with the C-terminal of MAPK15.

The protein localises to the nucleus. It localises to the membrane. It is found in the cell membrane. Its subcellular location is the cytoplasm. The protein resides in the secreted. The protein localises to the extracellular space. It localises to the extracellular matrix. It catalyses the reaction chloride(in) = chloride(out). In the soluble state, catalyzes glutaredoxin-like thiol disulfide exchange reactions with reduced glutathione as electron donor. Reduced in a glutathione-dependent way and secreted into the extracellular matrix where it activates TGM2 and promotes blood vessel growth during tissue remodeling as occurs in tumorigenesis. Can reduce specific cysteines in TGM2 and regulate cofactor binding. Can insert into membranes and form outwardly rectifying chloride ion channels. May participate in cellular growth control. This Mus musculus (Mouse) protein is Chloride intracellular channel protein 3.